A 176-amino-acid chain; its full sequence is Pectinesterase inhibitor 1 (176 aa).

Positions 1-25 (MAANLRNNAFLSSLMFLLLIGSSYA) are cleaved as a signal peptide. Intrachain disulfides connect cysteine 35–cysteine 44 and cysteine 98–cysteine 138. N-linked (GlcNAc...) asparagine glycosylation is present at asparagine 154.

This sequence belongs to the PMEI family. In terms of assembly, monomer and homodimer. Interacts in vitro with PPME1. In terms of tissue distribution, highest expression in flowers. Expressed exclusively at the pollen tube tip.

It is found in the secreted. It localises to the extracellular space. Its subcellular location is the apoplast. Inhibits pectin methylesterase (PME) from flowers and siliques. Inhibits PME from leaves. In Arabidopsis thaliana (Mouse-ear cress), this protein is Pectinesterase inhibitor 1.